Consider the following 516-residue polypeptide: Sodium channel protein Nach (516 aa).

Topologically, residues 1 to 49 are cytoplasmic; that stretch reads MGHEEELSPEQVDLKVSPLMGSLKRTWNDFCATSSIHGLRYTRDEDTNR. A helical membrane pass occupies residues 50–70; it reads IVHFVWLLISLVMFICAVVMA. Topologically, residues 71-452 are extracellular; sequence RTFYIDFRSN…LVSNLGSAFS (382 aa). N-linked (GlcNAc...) asparagine glycosylation is found at asparagine 128, asparagine 165, asparagine 220, and asparagine 348. Residues 453-473 form a helical membrane-spanning segment; sequence LFVGMSMLSVVEIMYYFSVIL. Residues 474 to 516 lie on the Cytoplasmic side of the membrane; it reads RKNYVLECEARKKMLHKGPKFAWPKANDSHSKHQKSVFIIHKM.

Belongs to the amiloride-sensitive sodium channel (TC 1.A.6) family.

The protein localises to the membrane. Part of a complex that plays a role in tracheal liquid clearance. Probable role in sodium transport. This Drosophila ananassae (Fruit fly) protein is Sodium channel protein Nach (Nach).